Here is a 195-residue protein sequence, read N- to C-terminus: Adenylate kinase (195 aa).

8-16 (GIPGVGKTT) contacts ATP.

Belongs to the archaeal adenylate kinase family.

It localises to the cytoplasm. It carries out the reaction AMP + ATP = 2 ADP. This Saccharolobus islandicus (strain M.14.25 / Kamchatka #1) (Sulfolobus islandicus) protein is Adenylate kinase.